Consider the following 514-residue polypeptide: ATP synthase subunit alpha (514 aa).

Residue 170–177 (GDRQIGKT) coordinates ATP.

This sequence belongs to the ATPase alpha/beta chains family. In terms of assembly, F-type ATPases have 2 components, CF(1) - the catalytic core - and CF(0) - the membrane proton channel. CF(1) has five subunits: alpha(3), beta(3), gamma(1), delta(1), epsilon(1). CF(0) has three main subunits: a(1), b(2) and c(9-12). The alpha and beta chains form an alternating ring which encloses part of the gamma chain. CF(1) is attached to CF(0) by a central stalk formed by the gamma and epsilon chains, while a peripheral stalk is formed by the delta and b chains.

The protein resides in the cell inner membrane. The catalysed reaction is ATP + H2O + 4 H(+)(in) = ADP + phosphate + 5 H(+)(out). In terms of biological role, produces ATP from ADP in the presence of a proton gradient across the membrane. The alpha chain is a regulatory subunit. In Pseudomonas syringae pv. tomato (strain ATCC BAA-871 / DC3000), this protein is ATP synthase subunit alpha.